Reading from the N-terminus, the 545-residue chain is Chaperonin GroEL (545 aa).

ATP is bound by residues 29–32 (TLGP), lysine 50, 86–90 (DGTTT), glycine 415, and aspartate 495.

Belongs to the chaperonin (HSP60) family. As to quaternary structure, forms a cylinder of 14 subunits composed of two heptameric rings stacked back-to-back. Interacts with the co-chaperonin GroES.

It localises to the cytoplasm. It carries out the reaction ATP + H2O + a folded polypeptide = ADP + phosphate + an unfolded polypeptide.. Together with its co-chaperonin GroES, plays an essential role in assisting protein folding. The GroEL-GroES system forms a nano-cage that allows encapsulation of the non-native substrate proteins and provides a physical environment optimized to promote and accelerate protein folding. The protein is Chaperonin GroEL of Bacteroides thetaiotaomicron (strain ATCC 29148 / DSM 2079 / JCM 5827 / CCUG 10774 / NCTC 10582 / VPI-5482 / E50).